Here is a 380-residue protein sequence, read N- to C-terminus: 3-isopropylmalate dehydrogenase (380 aa).

Residue 79–90 (GPEWAGVHPTPE) coordinates NAD(+). Positions 97, 107, 136, and 229 each coordinate substrate. Residues Asp-229, Asp-254, and Asp-258 each contribute to the Mg(2+) site. An NAD(+)-binding site is contributed by 294 to 306 (GSAPDISGKGLAN).

Belongs to the isocitrate and isopropylmalate dehydrogenases family. Homodimer. Requires Mg(2+) as cofactor. The cofactor is Mn(2+).

It is found in the cytoplasm. The enzyme catalyses (2R,3S)-3-isopropylmalate + NAD(+) = 4-methyl-2-oxopentanoate + CO2 + NADH. Its pathway is amino-acid biosynthesis; L-leucine biosynthesis; L-leucine from 3-methyl-2-oxobutanoate: step 3/4. Its function is as follows. Catalyzes the oxidation of 3-carboxy-2-hydroxy-4-methylpentanoate (3-isopropylmalate) to 3-carboxy-4-methyl-2-oxopentanoate. The product decarboxylates to 4-methyl-2 oxopentanoate. The sequence is that of 3-isopropylmalate dehydrogenase (LEU2) from Hapsidospora chrysogena (Acremonium chrysogenum).